The sequence spans 296 residues: m7GpppN-mRNA hydrolase NUDT17 (296 aa).

A Nudix hydrolase domain is found at 90–236 (GRGVDVGVAV…DSGSPCGPLP (147 aa)). Residues 129 to 150 (GHVELGEQLLEAGLRELQEETG) carry the Nudix box motif. The Mg(2+) site is built by glutamate 144 and glutamate 148.

It belongs to the Nudix hydrolase family. The cofactor is Mg(2+). Mn(2+) is required as a cofactor.

It catalyses the reaction a 5'-end (N(7)-methyl 5'-triphosphoguanosine)-ribonucleoside in mRNA + H2O = N(7)-methyl-GDP + a 5'-end phospho-ribonucleoside in mRNA + 2 H(+). Functionally, acts as a decapping enzyme capable of hydrolyzing monomethylated capped RNAs (in vitro). Hydrolyzes monomethylated capped RNA after alpha and beta phosphates to form N(7)-methyl-GDP. Shows low activity towards unmethylated capped RNA. This Xenopus laevis (African clawed frog) protein is m7GpppN-mRNA hydrolase NUDT17 (nudt17).